The primary structure comprises 31 residues: GLFLDTLKGAAKDVAGKLLEGLKCKIAGCKP.

Cys-24 and Cys-29 form a disulfide bridge.

In terms of tissue distribution, expressed by the skin glands.

The protein localises to the secreted. Antibacterial activity against Gram-positive bacterium S.aureus and Gram-negative bacterium E.coli. Has activity against C.albicans. In Lithobates clamitans (Green frog), this protein is Ranatuerin-2Ca.